Consider the following 118-residue polypeptide: Ribonuclease P protein component (118 aa).

It belongs to the RnpA family. In terms of assembly, consists of a catalytic RNA component (M1 or rnpB) and a protein subunit.

The enzyme catalyses Endonucleolytic cleavage of RNA, removing 5'-extranucleotides from tRNA precursor.. In terms of biological role, RNaseP catalyzes the removal of the 5'-leader sequence from pre-tRNA to produce the mature 5'-terminus. It can also cleave other RNA substrates such as 4.5S RNA. The protein component plays an auxiliary but essential role in vivo by binding to the 5'-leader sequence and broadening the substrate specificity of the ribozyme. This is Ribonuclease P protein component from Vibrio parahaemolyticus serotype O3:K6 (strain RIMD 2210633).